The sequence spans 176 residues: CDP-archaeol synthase (176 aa).

Helical transmembrane passes span 41–61, 73–93, 114–134, and 138–158; these read GLIG…FLYN, IITV…KSYF, VVGS…LNWF, and FDSV…SPLL.

This sequence belongs to the CDP-archaeol synthase family. It depends on Mg(2+) as a cofactor.

It localises to the cell membrane. It catalyses the reaction 2,3-bis-O-(geranylgeranyl)-sn-glycerol 1-phosphate + CTP + H(+) = CDP-2,3-bis-O-(geranylgeranyl)-sn-glycerol + diphosphate. The protein operates within membrane lipid metabolism; glycerophospholipid metabolism. Its function is as follows. Catalyzes the formation of CDP-2,3-bis-(O-geranylgeranyl)-sn-glycerol (CDP-archaeol) from 2,3-bis-(O-geranylgeranyl)-sn-glycerol 1-phosphate (DGGGP) and CTP. This reaction is the third ether-bond-formation step in the biosynthesis of archaeal membrane lipids. The polypeptide is CDP-archaeol synthase (Methanocorpusculum labreanum (strain ATCC 43576 / DSM 4855 / Z)).